Consider the following 375-residue polypeptide: Succinyl-diaminopimelate desuccinylase (375 aa).

H66 contributes to the Zn(2+) binding site. The active site involves D68. Zn(2+) is bound at residue D99. Residue E130 is the Proton acceptor of the active site. Residues E131, E159, and H345 each contribute to the Zn(2+) site.

The protein belongs to the peptidase M20A family. DapE subfamily. As to quaternary structure, homodimer. Requires Zn(2+) as cofactor. Co(2+) is required as a cofactor.

It catalyses the reaction N-succinyl-(2S,6S)-2,6-diaminopimelate + H2O = (2S,6S)-2,6-diaminopimelate + succinate. It participates in amino-acid biosynthesis; L-lysine biosynthesis via DAP pathway; LL-2,6-diaminopimelate from (S)-tetrahydrodipicolinate (succinylase route): step 3/3. Its function is as follows. Catalyzes the hydrolysis of N-succinyl-L,L-diaminopimelic acid (SDAP), forming succinate and LL-2,6-diaminopimelate (DAP), an intermediate involved in the bacterial biosynthesis of lysine and meso-diaminopimelic acid, an essential component of bacterial cell walls. The sequence is that of Succinyl-diaminopimelate desuccinylase from Xanthobacter autotrophicus (strain ATCC BAA-1158 / Py2).